We begin with the raw amino-acid sequence, 2512 residues long: Fatty acid synthase (2512 aa).

An N-acetylglutamate modification is found at glutamate 2. Positions 2 to 406 (EDVVIAGIAG…GSNAHVILRP (405 aa)) constitute a Ketosynthase family 3 (KS3) domain. Active-site for beta-ketoacyl synthase activity residues include cysteine 161, histidine 293, and histidine 331. The segment at 427 to 815 (GRTQEAVEIL…GINVLGNNLF (389 aa)) is acyl and malonyl transferases. Catalysis depends on serine 580, which acts as the For acyl/malonyl transferase activity. Residues 646–647 (DT), phenylalanine 670, and arginine 772 each bind an acyl-CoA. The N-terminal hotdog fold stretch occupies residues 844-967 (PKAEDFPSGS…ISLLENDALK (124 aa)). The 268-residue stretch at 844–1111 (PKAEDFPSGS…ASVAPRRQQE (268 aa)) folds into the PKS/mFAS DH domain. The Proton acceptor; for dehydratase activity role is filled by histidine 878. The interval 984–1111 (AKSGLLMEDV…ASVAPRRQQE (128 aa)) is C-terminal hotdog fold. Aspartate 1034 functions as the Proton donor; for dehydratase activity in the catalytic mechanism. Cysteine 1475 carries the S-nitrosocysteine modification. Positions 1638–1866 (WEVPENWTLE…MIKIQEEEKQ (229 aa)) are enoyl reductase. 1675–1692 (VLIHSGSGGVGQAAIAIA) serves as a coordination point for NADP(+). Position 1708 is an N6-(pyridoxal phosphate)lysine (lysine 1708). The interval 1867–2119 (YPLRSEPVKL…SFVLAEKVSV (253 aa)) is beta-ketoacyl reductase. 1889–1904 (SYIITGGLGGFGLELA) provides a ligand contact to NADP(+). Cysteine 2093 is subject to S-nitrosocysteine. Residues 2120–2200 (KSEGGSQRDL…ELSSKTGTAE (81 aa)) enclose the Carrier domain. Serine 2158 carries the O-(pantetheine 4'-phosphoryl)serine modification. Residues 2209-2511 (KTGPGEPPKL…LAEPRVSVRE (303 aa)) form a thioesterase region. Catalysis depends on for thioesterase activity residues serine 2309 and histidine 2482.

Homodimer which is arranged in a head to tail fashion. In terms of processing, S-nitrosylation of Fatty acid synthase at cysteine residues Cys-1475 or Cys-2093 is important for the enzyme dimerization. In adipocytes, S-nitrosylation of Fatty acid synthase occurs under physiological conditions and gradually increases during adipogenesis.

It carries out the reaction acetyl-CoA + n malonyl-CoA + 2n NADPH + 2n H(+) = a long-chain fatty acid + (n+1) CoA + n CO2 + 2n NADP(+).. The enzyme catalyses holo-[ACP] + acetyl-CoA = acetyl-[ACP] + CoA. The catalysed reaction is holo-[ACP] + malonyl-CoA = malonyl-[ACP] + CoA. It catalyses the reaction a fatty acyl-[ACP] + malonyl-[ACP] + H(+) = a 3-oxoacyl-[ACP] + holo-[ACP] + CO2. It carries out the reaction a (3R)-hydroxyacyl-[ACP] + NADP(+) = a 3-oxoacyl-[ACP] + NADPH + H(+). The enzyme catalyses a (3R)-hydroxyacyl-[ACP] = a (2E)-enoyl-[ACP] + H2O. The catalysed reaction is a 2,3-saturated acyl-[ACP] + NADP(+) = a (2E)-enoyl-[ACP] + NADPH + H(+). It catalyses the reaction hexadecanoyl-[ACP] + H2O = hexadecanoate + holo-[ACP] + H(+). It carries out the reaction acetyl-[ACP] + malonyl-[ACP] + H(+) = 3-oxobutanoyl-[ACP] + holo-[ACP] + CO2. The enzyme catalyses 3-oxobutanoyl-[ACP] + NADPH + H(+) = (3R)-hydroxybutanoyl-[ACP] + NADP(+). The catalysed reaction is (3R)-hydroxybutanoyl-[ACP] = (2E)-butenoyl-[ACP] + H2O. It catalyses the reaction (2E)-butenoyl-[ACP] + NADPH + H(+) = butanoyl-[ACP] + NADP(+). It carries out the reaction butanoyl-[ACP] + malonyl-[ACP] + H(+) = 3-oxohexanoyl-[ACP] + holo-[ACP] + CO2. The enzyme catalyses 3-oxohexanoyl-[ACP] + NADPH + H(+) = (3R)-hydroxyhexanoyl-[ACP] + NADP(+). The catalysed reaction is (3R)-hydroxyhexanoyl-[ACP] = (2E)-hexenoyl-[ACP] + H2O. It catalyses the reaction (2E)-hexenoyl-[ACP] + NADPH + H(+) = hexanoyl-[ACP] + NADP(+). It carries out the reaction hexanoyl-[ACP] + malonyl-[ACP] + H(+) = 3-oxooctanoyl-[ACP] + holo-[ACP] + CO2. The enzyme catalyses 3-oxooctanoyl-[ACP] + NADPH + H(+) = (3R)-hydroxyoctanoyl-[ACP] + NADP(+). The catalysed reaction is (3R)-hydroxyoctanoyl-[ACP] = (2E)-octenoyl-[ACP] + H2O. It catalyses the reaction (2E)-octenoyl-[ACP] + NADPH + H(+) = octanoyl-[ACP] + NADP(+). It carries out the reaction octanoyl-[ACP] + malonyl-[ACP] + H(+) = 3-oxodecanoyl-[ACP] + holo-[ACP] + CO2. The enzyme catalyses 3-oxodecanoyl-[ACP] + NADPH + H(+) = (3R)-hydroxydecanoyl-[ACP] + NADP(+). The catalysed reaction is (3R)-hydroxydecanoyl-[ACP] = (2E)-decenoyl-[ACP] + H2O. It catalyses the reaction (2E)-decenoyl-[ACP] + NADPH + H(+) = decanoyl-[ACP] + NADP(+). It carries out the reaction decanoyl-[ACP] + malonyl-[ACP] + H(+) = 3-oxododecanoyl-[ACP] + holo-[ACP] + CO2. The enzyme catalyses 3-oxododecanoyl-[ACP] + NADPH + H(+) = (3R)-hydroxydodecanoyl-[ACP] + NADP(+). The catalysed reaction is (3R)-hydroxydodecanoyl-[ACP] = (2E)-dodecenoyl-[ACP] + H2O. It catalyses the reaction (2E)-dodecenoyl-[ACP] + NADPH + H(+) = dodecanoyl-[ACP] + NADP(+). It carries out the reaction dodecanoyl-[ACP] + malonyl-[ACP] + H(+) = 3-oxotetradecanoyl-[ACP] + holo-[ACP] + CO2. The enzyme catalyses 3-oxotetradecanoyl-[ACP] + NADPH + H(+) = (3R)-hydroxytetradecanoyl-[ACP] + NADP(+). The catalysed reaction is (3R)-hydroxytetradecanoyl-[ACP] = (2E)-tetradecenoyl-[ACP] + H2O. It catalyses the reaction (2E)-tetradecenoyl-[ACP] + NADPH + H(+) = tetradecanoyl-[ACP] + NADP(+). It carries out the reaction tetradecanoyl-[ACP] + malonyl-[ACP] + H(+) = 3-oxohexadecanoyl-[ACP] + holo-[ACP] + CO2. The enzyme catalyses 3-oxohexadecanoyl-[ACP] + NADPH + H(+) = (3R)-hydroxyhexadecanoyl-[ACP] + NADP(+). The catalysed reaction is (3R)-hydroxyhexadecanoyl-[ACP] = (2E)-hexadecenoyl-[ACP] + H2O. It catalyses the reaction (2E)-hexadecenoyl-[ACP] + NADPH + H(+) = hexadecanoyl-[ACP] + NADP(+). It carries out the reaction hexadecanoyl-[ACP] + malonyl-[ACP] + H(+) = 3-oxooctadecanoyl-[ACP] + holo-[ACP] + CO2. The enzyme catalyses 3-oxooctadecanoyl-[ACP] + NADPH + H(+) = (3R)-hydroxyoctadecanoyl-[ACP] + NADP(+). The catalysed reaction is (3R)-hydroxyoctadecanoyl-[ACP] = (2E)-octadecenoyl-[ACP] + H2O. It catalyses the reaction (2E)-octadecenoyl-[ACP] + NADPH + H(+) = octadecanoyl-[ACP] + NADP(+). It carries out the reaction tetradecanoyl-[ACP] + H2O = tetradecanoate + holo-[ACP] + H(+). The enzyme catalyses octadecanoyl-[ACP] + H2O = octadecanoate + holo-[ACP] + H(+). The protein operates within lipid metabolism; fatty acid biosynthesis. Cerulenin, a potent non-competitive pharmacological inhibitor of FAS, binds covalently to the active site of the condensing enzyme region, inactivating a key enzyme step in fatty acid synthesis. Functionally, fatty acid synthetase is a multifunctional enzyme that catalyzes the de novo biosynthesis of long-chain saturated fatty acids starting from acetyl-CoA and malonyl-CoA in the presence of NADPH. This multifunctional protein contains 7 catalytic activities and a site for the binding of the prosthetic group 4'-phosphopantetheine of the acyl carrier protein ([ACP]) domain. This Gallus gallus (Chicken) protein is Fatty acid synthase (FASN).